We begin with the raw amino-acid sequence, 430 residues long: Tyrosine--tRNA ligase (430 aa).

An L-tyrosine-binding site is contributed by tyrosine 32. The short motif at 37-46 (PTADSLHIGH) is the 'HIGH' region element. Residues tyrosine 172 and glutamine 176 each coordinate L-tyrosine. The 'KMSKS' region motif lies at 232 to 236 (KFGKT). Residue lysine 235 coordinates ATP. Residues 362 to 429 (VKAVDLFVDN…GKKNYYLIIA (68 aa)) enclose the S4 RNA-binding domain.

Belongs to the class-I aminoacyl-tRNA synthetase family. TyrS type 1 subfamily. Homodimer.

The protein resides in the cytoplasm. It catalyses the reaction tRNA(Tyr) + L-tyrosine + ATP = L-tyrosyl-tRNA(Tyr) + AMP + diphosphate + H(+). Its function is as follows. Catalyzes the attachment of tyrosine to tRNA(Tyr) in a two-step reaction: tyrosine is first activated by ATP to form Tyr-AMP and then transferred to the acceptor end of tRNA(Tyr). The polypeptide is Tyrosine--tRNA ligase (Bacteroides fragilis (strain ATCC 25285 / DSM 2151 / CCUG 4856 / JCM 11019 / LMG 10263 / NCTC 9343 / Onslow / VPI 2553 / EN-2)).